A 131-amino-acid chain; its full sequence is Small ribosomal subunit protein bS6 (131 aa).

The disordered stretch occupies residues 98-131 (EASPMVKAKDERRERREDFANETADDSEAGDSEE). The span at 104-116 (KAKDERRERREDF) shows a compositional bias: basic and acidic residues. Positions 120–131 (TADDSEAGDSEE) are enriched in acidic residues.

Belongs to the bacterial ribosomal protein bS6 family.

Functionally, binds together with bS18 to 16S ribosomal RNA. The chain is Small ribosomal subunit protein bS6 from Klebsiella pneumoniae (strain 342).